A 315-amino-acid chain; its full sequence is Ester hydrolase C11orf54 homolog (315 aa).

Zn(2+) is bound by residues His266, His268, and His278.

As to quaternary structure, monomer. The cofactor is Zn(2+).

It is found in the nucleus. It localises to the cytoplasm. Functionally, exhibits ester hydrolase activity on the substrate p-nitrophenyl acetate, in vitro. Regulates DNA damage and repair by regulating HIF1A degradation via chaperone-mediated autophagy (CMA). The sequence is that of Ester hydrolase C11orf54 homolog from Mus musculus (Mouse).